A 249-amino-acid polypeptide reads, in one-letter code: Derlin-2.1 (249 aa).

The Cytoplasmic portion of the chain corresponds to 1-21 (MAQAVEEWYRQMPIITRSYLT). Residues 22–42 (AAVVTTVGCTLEIISPYHLYL) traverse the membrane as a helical segment. At 43–96 (NPKLVVQHYEIWRLVTNFLYFRKMDLDFLFHMFFLARYCKLLEENSFRGRTADF) the chain is on the lumenal side. A helical transmembrane segment spans residues 97–117 (FYMLLFGATVLTSIVLIGGMI). The Cytoplasmic segment spans residues 118 to 122 (PYISE). Residues 123–143 (TFARILFLSNSLTFMMVYVWS) form a helical membrane-spanning segment. Residues 144-152 (KHNPFIHMS) are Lumenal-facing. A helical transmembrane segment spans residues 153–173 (FLGLFTFTAAYLPWVLLGFSI). Topologically, residues 174–249 (LVGSSTWVDL…GAMGLDPQAQ (76 aa)) are cytoplasmic.

Belongs to the derlin family. As to expression, expressed in roots, stalks, leaves, embryo and endosperm.

It is found in the endoplasmic reticulum membrane. Functionally, may be involved in the degradation process of specific misfolded endoplasmic reticulum (ER) luminal proteins. In Zea mays (Maize), this protein is Derlin-2.1 (DER2.1).